Reading from the N-terminus, the 566-residue chain is Alpha-amylase (566 aa).

Positions 1–28 (MARRLATASLAVLAAAATALTAPTPAAA) are cleaved as a signal peptide. Ca(2+) is bound by residues Asn120, Gln166, and Asp175. Asp205 functions as the Nucleophile in the catalytic mechanism. His209 is a Ca(2+) binding site. Glu232 serves as the catalytic Proton donor. Positions 465–566 (GPGTGQTSAS…ALTLNDTWRG (102 aa)) constitute a CBM20 domain.

This sequence belongs to the glycosyl hydrolase 13 family. Monomer. It depends on Ca(2+) as a cofactor.

The enzyme catalyses Endohydrolysis of (1-&gt;4)-alpha-D-glucosidic linkages in polysaccharides containing three or more (1-&gt;4)-alpha-linked D-glucose units.. This Streptomyces griseus protein is Alpha-amylase (amy).